The sequence spans 296 residues: MEAEKFVLITGCSEGGIGNALALKFHQEGFQVLATARQVERMDNLTKAGLQTLKLDVTDEDSVREVEQEVRKFTNGSLHYLINNAGAPCSAPAIDLDIEDVSKVMDVNFYGVIRMNKAFQHQLIRAKGTIVNVNSLVSYVPFAFNAAYNASKAALLAYSNTLRIELAPFGVQVTSIMTGGVQTKIQSKPLGTMTEAAIPENSIYYPYRKLILENRNPVEKFVTIEEFADAAYPQLVGRGRWYQLFKPGVRPAQIWAGYMSSAGRVGSMLPVEVFSMSVRLIVKLPSTAVWRDHTVD.

Ile9 contacts NADP(+). The GXSXG signature appears at 11–15 (GCSEG). Residues Thr35, Arg41, Asp56, Asn84, Lys117, Tyr148, Lys152, Val181, and Thr183 each coordinate NADP(+). The Proton donor role is filled by Tyr148. The active-site Lowers pKa of active site Tyr is Lys152.

This sequence belongs to the short-chain dehydrogenases/reductases (SDR) family.

Its subcellular location is the lipid droplet. It localises to the cytoplasm. It is found in the vacuole. The protein localises to the endoplasmic reticulum. The protein resides in the golgi apparatus. Its subcellular location is the mitochondrion outer membrane. It catalyses the reaction 1-hexadecanoyl-sn-glycero-3-phosphate + NADP(+) = 1-hexadecanoylglycerone 3-phosphate + NADPH + H(+). The enzyme catalyses a 1-acylglycerone 3-phosphate + NADPH + H(+) = a 1-acyl-sn-glycero-3-phosphate + NADP(+). The catalysed reaction is a triacylglycerol + H2O = a diacylglycerol + a fatty acid + H(+). Can convert acyl and alkyl dihydroxyacetone-phosphate (DHAP) into glycerolipids and ether lipids, respectively. Required for the biosynthesis of phosphatidic acid via the DHAP pathway, where it reduces 1-acyl DHAP to lysophosphatidic acid (LPA). Also has triacylglycerol (TAG) lipase activity. Involved in the mobilization of the non-polar storage lipids triacylglycerols (TAGs) from lipid particles by hydrolysis of TAGs. Lipolysis of TAG by AYR1 is essential for starvation-induced autophagy. Forms an NADPH-regulated cation-selective channel in the mitochondrial outer membrane. The sequence is that of NADPH-dependent 1-acyldihydroxyacetone phosphate reductase (ayr1) from Schizosaccharomyces pombe (strain 972 / ATCC 24843) (Fission yeast).